Consider the following 362-residue polypeptide: 3-isopropylmalate dehydrogenase (362 aa).

Residue 77–88 (GPKWGTGAVRPE) participates in NAD(+) binding. The substrate site is built by R95, R105, R134, and D223. The Mg(2+) site is built by D223, D248, and D252. 287–298 (GSAPDLPANKVN) is an NAD(+) binding site.

The protein belongs to the isocitrate and isopropylmalate dehydrogenases family. As to quaternary structure, homodimer. Mg(2+) serves as cofactor. It depends on Mn(2+) as a cofactor.

The protein localises to the cytoplasm. It carries out the reaction (2R,3S)-3-isopropylmalate + NAD(+) = 4-methyl-2-oxopentanoate + CO2 + NADH. It participates in amino-acid biosynthesis; L-leucine biosynthesis; L-leucine from 3-methyl-2-oxobutanoate: step 3/4. Functionally, catalyzes the oxidation of 3-carboxy-2-hydroxy-4-methylpentanoate (3-isopropylmalate) to 3-carboxy-4-methyl-2-oxopentanoate. The product decarboxylates to 4-methyl-2 oxopentanoate. This Kluyveromyces lactis (strain ATCC 8585 / CBS 2359 / DSM 70799 / NBRC 1267 / NRRL Y-1140 / WM37) (Yeast) protein is 3-isopropylmalate dehydrogenase (LEU2).